We begin with the raw amino-acid sequence, 431 residues long: UDP-N-acetylmuramate--L-alanine ligase (431 aa).

Residue 108 to 114 (GAHGKST) participates in ATP binding.

This sequence belongs to the MurCDEF family.

The protein localises to the cytoplasm. It catalyses the reaction UDP-N-acetyl-alpha-D-muramate + L-alanine + ATP = UDP-N-acetyl-alpha-D-muramoyl-L-alanine + ADP + phosphate + H(+). It functions in the pathway cell wall biogenesis; peptidoglycan biosynthesis. In terms of biological role, cell wall formation. The chain is UDP-N-acetylmuramate--L-alanine ligase from Campylobacter jejuni subsp. jejuni serotype O:6 (strain 81116 / NCTC 11828).